The primary structure comprises 130 residues: Small ribosomal subunit protein uS9 (130 aa).

It belongs to the universal ribosomal protein uS9 family.

This Pseudomonas aeruginosa (strain LESB58) protein is Small ribosomal subunit protein uS9.